The primary structure comprises 99 residues: Large ribosomal subunit protein bL27 (99 aa).

Positions 1–9 (MLLMNLQLF) are excised as a propeptide.

This sequence belongs to the bacterial ribosomal protein bL27 family. The N-terminus is cleaved by ribosomal processing cysteine protease Prp.

The sequence is that of Large ribosomal subunit protein bL27 from Clostridium novyi (strain NT).